The following is a 386-amino-acid chain: Phosphoglycerate kinase (386 aa).

Residues 21–23 (DLN), R36, 59–62 (HLGR), R113, and R146 contribute to the substrate site. ATP-binding positions include K197, E314, and 340–343 (GGDT).

The protein belongs to the phosphoglycerate kinase family. As to quaternary structure, monomer.

It is found in the cytoplasm. It carries out the reaction (2R)-3-phosphoglycerate + ATP = (2R)-3-phospho-glyceroyl phosphate + ADP. It participates in carbohydrate degradation; glycolysis; pyruvate from D-glyceraldehyde 3-phosphate: step 2/5. This is Phosphoglycerate kinase from Azotobacter vinelandii (strain DJ / ATCC BAA-1303).